The sequence spans 721 residues: Teichoic acid poly(glycerol phosphate) polymerase (721 aa).

Residues Trp-443–Pro-447, Arg-511, Pro-545–Thr-546, Arg-582–His-584, Ser-624–Ser-625, and Asp-629 each bind CDP-glycerol.

This sequence belongs to the CDP-glycerol glycerophosphotransferase family.

Its subcellular location is the cell membrane. The enzyme catalyses 4-O-[(2R)-glycerylphospho]-N-acetyl-beta-D-mannosaminyl-(1-&gt;4)-N-acetyl-alpha-D-glucosaminyl di-trans,octa-cis-undecaprenyl diphosphate + n CDP-glycerol = 4-O-{[(2R)-1-glycerylphospho](n)-(2R)-1-glycerylphospho}-N-acetyl-beta-D-mannosaminyl-(1-&gt;4)-N-acetyl-alpha-D-glucosaminyl undecaprenyl diphosphate + n CMP + n H(+). It participates in cell wall biogenesis; poly(glycerol phosphate) teichoic acid biosynthesis. Responsible for the polymerization of the main chain of the major teichoic acid by sequential transfer of glycerol phosphate units from CDP-glycerol to the disaccharide linkage unit. Synthesizes polymers of approximately 35 glycerol phosphate units in length. This chain is Teichoic acid poly(glycerol phosphate) polymerase, found in Staphylococcus epidermidis (strain ATCC 35984 / DSM 28319 / BCRC 17069 / CCUG 31568 / BM 3577 / RP62A).